Consider the following 371-residue polypeptide: MKLNTLQLENYRNYEQVTLDCHPEVNILIGENAQGKTNLLESIYTLALAKSHRTSNDKELIRFKSDYAKIEGELSYRHGTMPLTMFITKKGKQVKVNHLEQSRLTQYIGHLNVVLFAPEDLNIVKGSPQIRRRFIDMELGQISAVYLNDLAQYQRILKQKNNYLKQLQIGQKTDTTMLEVLNQQFAEYALKVTLRREHFIKELETLAQPIHAGITNDRETLTLDYVPSLKLSNYEANQSELIEEVLALLNDNLQREKERGVCLYGPHRDDLSFNVNGMDAQTYGSQGQQRTTALSIKLAEIELMNIEVGEYPILLLDDVLSELDDSRQTHLLSTIQHKVQTFVTTTSVEGIDHEIMNNAKLYRISQGEILK.

30-37 (GENAQGKT) is an ATP binding site.

The protein belongs to the RecF family.

The protein localises to the cytoplasm. Functionally, the RecF protein is involved in DNA metabolism; it is required for DNA replication and normal SOS inducibility. RecF binds preferentially to single-stranded, linear DNA. It also seems to bind ATP. The chain is DNA replication and repair protein RecF from Staphylococcus epidermidis (strain ATCC 35984 / DSM 28319 / BCRC 17069 / CCUG 31568 / BM 3577 / RP62A).